The chain runs to 216 residues: Purine nucleoside phosphorylase DeoD-type (216 aa).

Residues arginine 4, arginine 23, and 67–70 (RVGT) each bind phosphate. Residues 159–161 (EME) and 183–184 (SD) contribute to the a purine D-ribonucleoside site. Residue aspartate 184 is the Proton donor of the active site.

The protein belongs to the PNP/UDP phosphorylase family. Homohexamer; trimer of homodimers.

It carries out the reaction a purine D-ribonucleoside + phosphate = a purine nucleobase + alpha-D-ribose 1-phosphate. The enzyme catalyses a purine 2'-deoxy-D-ribonucleoside + phosphate = a purine nucleobase + 2-deoxy-alpha-D-ribose 1-phosphate. In terms of biological role, catalyzes the reversible phosphorolytic breakdown of the N-glycosidic bond in the beta-(deoxy)ribonucleoside molecules, with the formation of the corresponding free purine bases and pentose-1-phosphate. In Streptococcus thermophilus, this protein is Purine nucleoside phosphorylase DeoD-type.